The chain runs to 357 residues: MSKGLPETRTDAAMSELVPEPRPKPAVPMKPIGINPNLLGYIGIDTIIEQMRKKTMKTGFDFNIMVVGQSGLGKSTLVNTLFKSQVSRKASSWNREEKIPKTVEIKAIGHVIEEGGVKMKLTVIDTPGFGDQINNENCWEPIEKYINEQYEKFLKEEVNIARKKRIPDTRVHCCLYFISPTGHSLRPLDLEFMKHLSKVVNIIPVIAKADTMTLEEKSEFKQRVRKELEVNGIEFYPQKEFDEDLEDKTENDKIRESMPFAVVGSDKEYQVNGKRVLGRKTPWGIIEVENLNHCEFALLRDFVIRTHLQDLKEVTHNIHYETYRAKRLNDNGGLPPGEGLLGTVLPPVPATPCPTAE.

The span at methionine 1–threonine 10 shows a compositional bias: basic and acidic residues. The tract at residues methionine 1–methionine 29 is disordered. A Septin-type G domain is found at threonine 58–aspartate 330. Residues glycine 68–serine 75 are G1 motif. Residue glycine 68–serine 75 participates in GTP binding. The residue at position 91 (serine 91) is a Phosphoserine. A GTP-binding site is contributed by threonine 102. The interval aspartate 125–glycine 128 is G3 motif. The segment at alanine 207–aspartate 210 is G4 motif. GTP contacts are provided by residues lysine 208–glutamate 216, glycine 264, and arginine 279.

This sequence belongs to the TRAFAC class TrmE-Era-EngA-EngB-Septin-like GTPase superfamily. Septin GTPase family. In terms of assembly, septins polymerize into heterooligomeric protein complexes that form filaments, and can associate with cellular membranes, actin filaments and microtubules. GTPase activity is required for filament formation. Phosphorylated by PKG on serine residues. Phosphorylated by PKG on Ser-91.

It localises to the cytoplasm. The protein resides in the cytoskeleton. The protein localises to the synapse. Filament-forming cytoskeletal GTPase. May play a role in cytokinesis (Potential). The polypeptide is Neuronal-specific septin-3 (Bos taurus (Bovine)).